A 159-amino-acid chain; its full sequence is Putative ribosomal RNA large subunit methyltransferase H (159 aa).

Residues Leu76, Gly108, and 127 to 132 (FSKMTF) each bind S-adenosyl-L-methionine.

It belongs to the RNA methyltransferase RlmH family.

The protein resides in the cytoplasm. The enzyme catalyses pseudouridine(1915) in 23S rRNA + S-adenosyl-L-methionine = N(3)-methylpseudouridine(1915) in 23S rRNA + S-adenosyl-L-homocysteine + H(+). In terms of biological role, specifically methylates the pseudouridine at position 1915 (m3Psi1915) in 23S rRNA. This chain is Putative ribosomal RNA large subunit methyltransferase H, found in Methanococcus maripaludis (strain C5 / ATCC BAA-1333).